A 314-amino-acid polypeptide reads, in one-letter code: Ribosomal RNA small subunit methyltransferase H (314 aa).

Residues 36-38 (GGH), Asp-56, Phe-81, Asp-103, and Gln-110 each bind S-adenosyl-L-methionine.

This sequence belongs to the methyltransferase superfamily. RsmH family.

It is found in the cytoplasm. It catalyses the reaction cytidine(1402) in 16S rRNA + S-adenosyl-L-methionine = N(4)-methylcytidine(1402) in 16S rRNA + S-adenosyl-L-homocysteine + H(+). Functionally, specifically methylates the N4 position of cytidine in position 1402 (C1402) of 16S rRNA. The chain is Ribosomal RNA small subunit methyltransferase H from Shewanella sediminis (strain HAW-EB3).